The chain runs to 205 residues: Large ribosomal subunit protein uL18 (205 aa).

The protein belongs to the universal ribosomal protein uL18 family. In terms of assembly, part of the 50S ribosomal subunit. Contacts the 5S and 23S rRNAs.

Its function is as follows. This is one of the proteins that bind and probably mediate the attachment of the 5S RNA into the large ribosomal subunit, where it forms part of the central protuberance. This Pyrobaculum islandicum (strain DSM 4184 / JCM 9189 / GEO3) protein is Large ribosomal subunit protein uL18.